A 151-amino-acid polypeptide reads, in one-letter code: uncharacterized protein (151 aa).

Positions 1–24 (MYYSIIIACLVLLLCLVIYVGHRA) are cleaved as a signal peptide.

It belongs to the asfivirus EP152R family.

Its subcellular location is the virion. This is an uncharacterized protein from Ornithodoros (relapsing fever ticks).